The primary structure comprises 799 residues: Transcriptional activator FLO8 (799 aa).

Positions 1 to 10 (MSYKVNSSYP) are enriched in polar residues. 8 disordered regions span residues 1–20 (MSYK…EQPY), 37–68 (TNSE…SDLK), 101–127 (AHLD…QNTF), 255–406 (TTGA…RVNK), 431–503 (NSKS…SVIL), 568–622 (ESGK…PHGF), 644–691 (VSQE…YDFD), and 705–758 (AYAS…NENQ). Over residues 41–55 (QQRQQQQQQQQQQQQ) the composition is skewed to low complexity. Residues 73–105 (CKNTLNEYIFDFLTKSSLKNTAAAFAQDAHLDR) form the LisH domain. Polar residues predominate over residues 270-285 (DFTNVGPTQNRSQNVT). Residues 307–317 (NNNTTNNTTNN) show a composition bias toward low complexity. The span at 318-340 (KSPVNQPKSLKTMHSTDKPNNVP) shows a compositional bias: polar residues. Positions 341 to 353 (TSKSTRSRSATSK) are enriched in low complexity. Basic residues predominate over residues 354-370 (AKGKVKAGLVAKRRRKN). Polar residues-rich tracts occupy residues 371–396 (NTAT…TTSE) and 460–480 (KAST…NSVV). The span at 482–497 (GKKRSPPNTRVSRRKS) shows a compositional bias: basic residues. Composition is skewed to polar residues over residues 584–593 (SKVSASSPLS) and 660–675 (GNDS…TLST).

This sequence belongs to the FLO8 family.

It localises to the nucleus. Functionally, required for diploid filamentous growth, haploid invasive growth and flocculation. Putative transcriptional activator of FLO1. The polypeptide is Transcriptional activator FLO8 (FLO8) (Saccharomyces cerevisiae (strain ATCC 204508 / S288c) (Baker's yeast)).